A 565-amino-acid chain; its full sequence is Adenine deaminase (565 aa).

It belongs to the metallo-dependent hydrolases superfamily. Adenine deaminase family. Mn(2+) serves as cofactor.

The enzyme catalyses adenine + H2O + H(+) = hypoxanthine + NH4(+). This chain is Adenine deaminase, found in Methylobacterium nodulans (strain LMG 21967 / CNCM I-2342 / ORS 2060).